The following is a 368-amino-acid chain: Probable endopolygalacturonase I (368 aa).

The first 18 residues, 1 to 18, serve as a signal peptide directing secretion; the sequence is MHSFQLLGLAALGSLVAA. A propeptide spanning residues 19-31 is cleaved from the precursor; that stretch reads APSPSRVSDLTER. The cysteines at positions 35 and 50 are disulfide-linked. PbH1 repeat units lie at residues 162–192, 193–214, 215–235, 244–265, 273–295, and 307–328; these read ANNL…DISE, SNGV…AINS, GKNI…SIGS, VQGV…RIKT, VSDV…VIQQ, and SNGI…DSKA. The active-site Proton donor is aspartate 207. A disulfide bond links cysteine 209 and cysteine 225. Residue histidine 229 is part of the active site. Disulfide bonds link cysteine 335–cysteine 340 and cysteine 359–cysteine 368.

The protein belongs to the glycosyl hydrolase 28 family.

It localises to the secreted. It catalyses the reaction (1,4-alpha-D-galacturonosyl)n+m + H2O = (1,4-alpha-D-galacturonosyl)n + (1,4-alpha-D-galacturonosyl)m.. Functionally, involved in maceration and soft-rotting of plant tissue. Hydrolyzes the 1,4-alpha glycosidic bonds of de-esterified pectate in the smooth region of the plant cell wall. This Aspergillus terreus (strain NIH 2624 / FGSC A1156) protein is Probable endopolygalacturonase I (pgaI).